Reading from the N-terminus, the 368-residue chain is Alanine racemase (368 aa).

The Proton acceptor; specific for D-alanine role is filled by lysine 40. The residue at position 40 (lysine 40) is an N6-(pyridoxal phosphate)lysine. A substrate-binding site is contributed by arginine 134. Tyrosine 263 serves as the catalytic Proton acceptor; specific for L-alanine. Residue methionine 310 participates in substrate binding.

Belongs to the alanine racemase family. The cofactor is pyridoxal 5'-phosphate.

The enzyme catalyses L-alanine = D-alanine. It participates in amino-acid biosynthesis; D-alanine biosynthesis; D-alanine from L-alanine: step 1/1. In terms of biological role, catalyzes the interconversion of L-alanine and D-alanine. May also act on other amino acids. This is Alanine racemase (alr) from Listeria innocua serovar 6a (strain ATCC BAA-680 / CLIP 11262).